Reading from the N-terminus, the 340-residue chain is Ketol-acid reductoisomerase (NADP(+)) (340 aa).

The region spanning 2–181 (VKMYYEADVK…GCTKAGVIET (180 aa)) is the KARI N-terminal Rossmann domain. NADP(+) contacts are provided by residues 25–28 (YGSQ), Arg-48, Ser-52, and 82–85 (DERQ). The active site involves His-107. An NADP(+)-binding site is contributed by Gly-133. The KARI C-terminal knotted domain maps to 182-327 (SFREETETDL…EQLRGMMSWI (146 aa)). Positions 190, 194, 226, and 230 each coordinate Mg(2+). Substrate is bound at residue Ser-251.

The protein belongs to the ketol-acid reductoisomerase family. Requires Mg(2+) as cofactor.

The enzyme catalyses (2R)-2,3-dihydroxy-3-methylbutanoate + NADP(+) = (2S)-2-acetolactate + NADPH + H(+). It catalyses the reaction (2R,3R)-2,3-dihydroxy-3-methylpentanoate + NADP(+) = (S)-2-ethyl-2-hydroxy-3-oxobutanoate + NADPH + H(+). Its pathway is amino-acid biosynthesis; L-isoleucine biosynthesis; L-isoleucine from 2-oxobutanoate: step 2/4. The protein operates within amino-acid biosynthesis; L-valine biosynthesis; L-valine from pyruvate: step 2/4. Its function is as follows. Involved in the biosynthesis of branched-chain amino acids (BCAA). Catalyzes an alkyl-migration followed by a ketol-acid reduction of (S)-2-acetolactate (S2AL) to yield (R)-2,3-dihydroxy-isovalerate. In the isomerase reaction, S2AL is rearranged via a Mg-dependent methyl migration to produce 3-hydroxy-3-methyl-2-ketobutyrate (HMKB). In the reductase reaction, this 2-ketoacid undergoes a metal-dependent reduction by NADPH to yield (R)-2,3-dihydroxy-isovalerate. The sequence is that of Ketol-acid reductoisomerase (NADP(+)) from Brevibacillus brevis (strain 47 / JCM 6285 / NBRC 100599).